The primary structure comprises 242 residues: MLKQLLSKCAEGKALTEDEAYAAMNIIMSGEATDSQIASLLSMLRLRGETVDELVGFVRAMRDRMTAIEASDDVIDTCGTGGDGAATFNVSTAAAIVISSLGVKVAKHGNRAVSSKSGSADVLERLGIDIHTSPSAAKQALETKGLAFLFAPLYHAAMKHAAGPRKEIGFRTVFNLIGPLANPARCKRQVVGVYSTCYAEKLAEAMRRLGSEHVLFVTGRDGLDECSIAAETDVVELKDGAI.

5-phospho-alpha-D-ribose 1-diphosphate-binding positions include Gly79, Gly82–Asp83, Thr87, Asn89–Thr92, Lys107–Ser115, and Ser119. Gly79 contributes to the anthranilate binding site. Ser91 lines the Mg(2+) pocket. Position 110 (Asn110) interacts with anthranilate. Residue Arg165 participates in anthranilate binding. Residues Asp224 and Glu225 each contribute to the Mg(2+) site.

The protein belongs to the anthranilate phosphoribosyltransferase family. As to quaternary structure, homodimer. Mg(2+) serves as cofactor.

It catalyses the reaction N-(5-phospho-beta-D-ribosyl)anthranilate + diphosphate = 5-phospho-alpha-D-ribose 1-diphosphate + anthranilate. It functions in the pathway amino-acid biosynthesis; L-tryptophan biosynthesis; L-tryptophan from chorismate: step 2/5. Its function is as follows. Catalyzes the transfer of the phosphoribosyl group of 5-phosphorylribose-1-pyrophosphate (PRPP) to anthranilate to yield N-(5'-phosphoribosyl)-anthranilate (PRA). The polypeptide is Anthranilate phosphoribosyltransferase (trpD) (Bacillus caldotenax).